Here is a 343-residue protein sequence, read N- to C-terminus: L-threonine 3-dehydrogenase (343 aa).

A Zn(2+)-binding site is contributed by Cys40. Catalysis depends on charge relay system residues Thr42 and His45. Positions 65, 66, 95, 98, 101, and 109 each coordinate Zn(2+). Residues Ile177, Asp197, Arg202, 264-266 (LGI), and 288-289 (IY) each bind NAD(+).

Belongs to the zinc-containing alcohol dehydrogenase family. As to quaternary structure, homotetramer. Zn(2+) is required as a cofactor.

The protein localises to the cytoplasm. The catalysed reaction is L-threonine + NAD(+) = (2S)-2-amino-3-oxobutanoate + NADH + H(+). Its pathway is amino-acid degradation; L-threonine degradation via oxydo-reductase pathway; glycine from L-threonine: step 1/2. In terms of biological role, catalyzes the NAD(+)-dependent oxidation of L-threonine to 2-amino-3-ketobutyrate. The polypeptide is L-threonine 3-dehydrogenase (Vibrio parahaemolyticus serotype O3:K6 (strain RIMD 2210633)).